We begin with the raw amino-acid sequence, 101 residues long: Large ribosomal subunit protein uL23 (101 aa).

Belongs to the universal ribosomal protein uL23 family. Part of the 50S ribosomal subunit. Contacts protein L29, and trigger factor when it is bound to the ribosome.

One of the early assembly proteins it binds 23S rRNA. One of the proteins that surrounds the polypeptide exit tunnel on the outside of the ribosome. Forms the main docking site for trigger factor binding to the ribosome. This chain is Large ribosomal subunit protein uL23, found in Corynebacterium diphtheriae (strain ATCC 700971 / NCTC 13129 / Biotype gravis).